Reading from the N-terminus, the 332-residue chain is 3'(2'),5'-bisphosphate nucleotidase (332 aa).

Aspartate 49 acts as the Proton acceptor in catalysis. Mg(2+) contacts are provided by glutamate 73, aspartate 129, isoleucine 131, and aspartate 132. The active-site Proton acceptor is the threonine 134. Adenosine 3',5'-bisphosphate is bound by residues threonine 134, serine 245, lysine 248, arginine 262, and aspartate 274. Serine 245, lysine 248, arginine 262, and aspartate 274 together coordinate AMP. A Mg(2+)-binding site is contributed by aspartate 274.

Belongs to the inositol monophosphatase superfamily. Requires Mg(2+) as cofactor.

It catalyses the reaction 3'-phosphoadenylyl sulfate + H2O = adenosine 5'-phosphosulfate + phosphate. The catalysed reaction is adenosine 3',5'-bisphosphate + H2O = AMP + phosphate. It carries out the reaction adenosine 2',5'-bisphosphate + H2O = AMP + phosphate. The enzyme catalyses 1D-myo-inositol 1,4-bisphosphate + H2O = 1D-myo-inositol 4-phosphate + phosphate. It catalyses the reaction 1D-myo-inositol 1,3,4-trisphosphate + H2O = 1D-myo-inositol 3,4-bisphosphate + phosphate. Functionally, phosphatase that converts adenosine 3'-phosphate 5'-phosphosulfate (PAPS) to adenosine 5'-phosphosulfate (APS) and 3'(2')-phosphoadenosine 5'-phosphate (PAP) to AMP. Is also able to hydrolyze inositol 1,4-bisphosphate and inositol 1,3,4-trisphosphate. The sequence is that of 3'(2'),5'-bisphosphate nucleotidase from Dictyostelium discoideum (Social amoeba).